The following is a 120-amino-acid chain: Large ribosomal subunit protein uL18 (120 aa).

Residues 1–26 are disordered; it reads MKLTRRESKQRRHRRVRGKVQGSPER. Basic residues predominate over residues 8–18; it reads SKQRRHRRVRG.

Belongs to the universal ribosomal protein uL18 family. As to quaternary structure, part of the 50S ribosomal subunit; part of the 5S rRNA/L5/L18/L25 subcomplex. Contacts the 5S and 23S rRNAs.

This is one of the proteins that bind and probably mediate the attachment of the 5S RNA into the large ribosomal subunit, where it forms part of the central protuberance. The protein is Large ribosomal subunit protein uL18 of Trichormus variabilis (strain ATCC 29413 / PCC 7937) (Anabaena variabilis).